Reading from the N-terminus, the 405-residue chain is Argininosuccinate synthase (405 aa).

Alanine 8–serine 16 is a binding site for ATP. Residues tyrosine 86 and serine 91 each contribute to the L-citrulline site. Glycine 116 is an ATP binding site. L-aspartate-binding residues include threonine 118, asparagine 122, and aspartate 123. Asparagine 122 provides a ligand contact to L-citrulline. L-citrulline-binding residues include arginine 126, serine 175, serine 184, glutamate 260, and tyrosine 272.

This sequence belongs to the argininosuccinate synthase family. Type 1 subfamily. In terms of assembly, homotetramer.

Its subcellular location is the cytoplasm. The enzyme catalyses L-citrulline + L-aspartate + ATP = 2-(N(omega)-L-arginino)succinate + AMP + diphosphate + H(+). It participates in amino-acid biosynthesis; L-arginine biosynthesis; L-arginine from L-ornithine and carbamoyl phosphate: step 2/3. In Koribacter versatilis (strain Ellin345), this protein is Argininosuccinate synthase.